Reading from the N-terminus, the 378-residue chain is Zinc transporter 7 (378 aa).

Over 1 to 37 the chain is Cytoplasmic; that stretch reads MLPLSIKDDEYKPPKFNLFGKISGWFRSILSDKTSRN. Residues 38 to 58 traverse the membrane as a helical segment; sequence LFFFLCLNLSFAFVELLYGIW. The Lumenal portion of the chain corresponds to 59-67; it reads SNCLGLISD. Residues 68–88 form a helical membrane-spanning segment; the sequence is SFHMFFDSTAILAGLAASVIS. Topologically, residues 89 to 102 are cytoplasmic; sequence KWRDNDAFSYGYVR. The chain crosses the membrane as a helical span at residues 103-123; sequence AEVLAGFVNGLFLIFTAFFIF. Residues 124–140 lie on the Lumenal side of the membrane; that stretch reads SEGVERALAPPDVHHER. Residues 141–161 traverse the membrane as a helical segment; that stretch reads LLLVSILGFVVNLVGIFVFNH. A his-rich loop region spans residues 161–220; sequence HGGHGHSHGSGHGHSHSLFNGALDHSHGHEDHCHSHEAKHGAAHSHDHDHAHGHGHLHSH. The Cytoplasmic segment spans residues 162–238; the sequence is GGHGHSHGSG…AGPSRQILQG (77 aa). Residues 186-223 are compositionally biased toward basic and acidic residues; that stretch reads SHGHEDHCHSHEAKHGAAHSHDHDHAHGHGHLHSHDGP. Residues 186-224 are disordered; sequence SHGHEDHCHSHEAKHGAAHSHDHDHAHGHGHLHSHDGPS. Residues 239 to 259 traverse the membrane as a helical segment; that stretch reads VFLHILADTLGSIGVIASAIM. Over 260 to 264 the chain is Lumenal; it reads MQNFG. A helical membrane pass occupies residues 265-285; the sequence is LMIADPICSILIAILIVVSVI. Residues 286–378 lie on the Cytoplasmic side of the membrane; sequence PLLRESVGIL…LYVQIDFAAM (93 aa).

The protein belongs to the cation diffusion facilitator (CDF) transporter (TC 2.A.4) family. SLC30A subfamily. Homooligomer. Highly expressed in liver, spleen, duodenum and part of the jejunum of small intestine (at protein level). Moderately expressed in kidney, lung, and brain. Barely detectable in heart. In brain, expressed in cerebellum, cerebral cortex and hippocampus (at protein level).

It is found in the golgi apparatus membrane. It localises to the cytoplasmic vesicle. The protein localises to the golgi apparatus. Its subcellular location is the trans-Golgi network. The protein resides in the sarcoplasmic reticulum. It is found in the mitochondrion. The enzyme catalyses Zn(2+)(in) = Zn(2+)(out). Zinc ion transporter mediating zinc entry from the cytosol into the lumen of organelles along the secretory pathway. By contributing to zinc ion homeostasis within the early secretory pathway, regulates the activation and folding of enzymes like alkaline phosphatases. The polypeptide is Zinc transporter 7 (Mus musculus (Mouse)).